We begin with the raw amino-acid sequence, 130 residues long: Blasticidin-S deaminase (130 aa).

Residues 1–129 form the CMP/dCMP-type deaminase domain; that stretch reads MPLSQEESTL…ELLPSGYMNR (129 aa). Position 28 (serine 28) interacts with substrate. Cysteine 54 is a Zn(2+) binding site. Glutamate 56 (proton donor) is an active-site residue. Arginine 82 is a substrate binding site. The Zn(2+) site is built by cysteine 88 and cysteine 91. Residue tyrosine 126 coordinates substrate.

It belongs to the cytidine and deoxycytidylate deaminase family. Homotetramer. Zn(2+) serves as cofactor.

The enzyme catalyses blasticidin S + H2O + H(+) = deaminohydroxyblasticidin S + NH4(+). In terms of biological role, catalyzes the deamination of the cytosine moiety of the antibiotics blasticidin S, cytomycin and acetylblasticidin S. The sequence is that of Blasticidin-S deaminase (bsd) from Aspergillus terreus (strain NIH 2624 / FGSC A1156).